Here is a 323-residue protein sequence, read N- to C-terminus: METKKNNSEYIPEFDKSFRHPRYWGAWLGVAAMAGIALTPPKFRDPILARLGRFAGRLGKSSRRRALINLSLCFPERSEAEREAIVDEMFATAPQAMAMMAELAIRGPEKIQPRVDWQGLEIIEEMRRNNEKVIFLVPHGWAVDIPAMLMASQGQKMAAMFHNQGNPVFDYVWNTVRRRFGGRLHARNDGIKPFIQSVRQGYWGYYLPDQDHGPEHSEFVDFFATYKATLPAIGRLMKVCRARVVPLFPIYDGKTHRLTIQVRPPMDDLLEADDHTIARRMNEEVEIFVGPRPEQYTWILKLLKTRKPGEIQPYKRKDLYPIK.

Residues 23–43 form a helical membrane-spanning segment; the sequence is YWGAWLGVAAMAGIALTPPKF. The HXXXXD motif signature appears at 139-144; sequence HGWAVD.

The protein belongs to the LpxL/LpxM/LpxP family. LpxM subfamily.

The protein localises to the cell inner membrane. It carries out the reaction alpha-Kdo-(2-&gt;4)-alpha-Kdo-(2-&gt;6)-(dodecanoyl)-lipid IVA (E. coli) + tetradecanoyl-[ACP] = alpha-Kdo-(2-&gt;4)-alpha-Kdo-(2-&gt;6)-lipid A (E. coli) + holo-[ACP]. It catalyses the reaction (9Z)-hexadecenoyl-(Kdo)2-lipid IVA (E. coli) + tetradecanoyl-[ACP] = ((9Z)-hexadecenoyl-tetradecanoyl)-(Kdo)2-lipid A + holo-[ACP]. It participates in glycolipid biosynthesis; KDO(2)-lipid A biosynthesis; KDO(2)-lipid A from CMP-3-deoxy-D-manno-octulosonate and lipid IV(A): step 4/4. The protein operates within bacterial outer membrane biogenesis; lipopolysaccharide biosynthesis. In terms of biological role, catalyzes the transfer of myristate from myristoyl-[acyl-carrier-protein] (ACP) to Kdo(2)-(lauroyl)-lipid IV(A) to form Kdo(2)-lipid A. Can probably also catalyze the transfer of myristate to Kdo(2)-(palmitoleoyl)-lipid IV(A) to form the cold-adapted Kdo(2)-lipid A. In vitro, can acylate Kdo(2)-lipid IV(A), but acylation of (KDO)2-(lauroyl)-lipid IV(A) is about 100 times faster. In vitro, can use lauroyl-ACP but displays a slight kinetic preference for myristoyl-ACP. This Escherichia coli (strain K12) protein is Lipid A biosynthesis myristoyltransferase.